The primary structure comprises 522 residues: Maturase K (522 aa).

Belongs to the intron maturase 2 family. MatK subfamily.

The protein localises to the plastid. Its subcellular location is the chloroplast. Usually encoded in the trnK tRNA gene intron. Probably assists in splicing its own and other chloroplast group II introns. This chain is Maturase K, found in Dianella ensifolia (Flax lily).